The following is a 392-amino-acid chain: Ameloblastin (392 aa).

The first 26 residues, 1–26 (MPALKIPLFKMKDMILILCLLKMSSA), serve as a signal peptide directing secretion. Hydroxyproline is present on Pro37. Phosphoserine is present on Ser43. Disordered stretches follow at residues 86–109 (FPWM…PGQK), 247–280 (TLEF…LADP), and 349–392 (TTLG…FQEP). Positions 97–109 (QQPSLQPQQPGQK) are enriched in low complexity. Residues 359–381 (VDSTATPDTQHTLMPRNKAQQPQ) are compositionally biased toward polar residues. The segment covering 382–392 (IKHDAWHFQEP) has biased composition (basic and acidic residues).

The protein belongs to the ameloblastin family.

It is found in the secreted. Its subcellular location is the extracellular space. The protein localises to the extracellular matrix. Functionally, involved in the mineralization and structural organization of enamel. The sequence is that of Ameloblastin (AMBN) from Bos taurus (Bovine).